The chain runs to 335 residues: Glycerol-3-phosphate dehydrogenase [NAD(P)+] (335 aa).

NADPH-binding residues include tryptophan 15, arginine 36, and lysine 109. Sn-glycerol 3-phosphate is bound by residues lysine 109, glycine 137, and serine 139. An NADPH-binding site is contributed by alanine 141. Sn-glycerol 3-phosphate is bound by residues lysine 192, aspartate 245, serine 255, arginine 256, and asparagine 257. Lysine 192 functions as the Proton acceptor in the catalytic mechanism. Arginine 256 lines the NADPH pocket. Residues leucine 279 and glutamate 281 each contribute to the NADPH site.

This sequence belongs to the NAD-dependent glycerol-3-phosphate dehydrogenase family.

The protein localises to the cytoplasm. The catalysed reaction is sn-glycerol 3-phosphate + NAD(+) = dihydroxyacetone phosphate + NADH + H(+). It carries out the reaction sn-glycerol 3-phosphate + NADP(+) = dihydroxyacetone phosphate + NADPH + H(+). The protein operates within membrane lipid metabolism; glycerophospholipid metabolism. Its function is as follows. Catalyzes the reduction of the glycolytic intermediate dihydroxyacetone phosphate (DHAP) to sn-glycerol 3-phosphate (G3P), the key precursor for phospholipid synthesis. This chain is Glycerol-3-phosphate dehydrogenase [NAD(P)+], found in Beijerinckia indica subsp. indica (strain ATCC 9039 / DSM 1715 / NCIMB 8712).